A 416-amino-acid chain; its full sequence is Probable mannose-6-phosphate isomerase (416 aa).

Residues Q99, H101, E126, and H259 each contribute to the Zn(2+) site. The active site involves R278.

Belongs to the mannose-6-phosphate isomerase type 1 family. Requires Zn(2+) as cofactor.

The protein resides in the cytoplasm. The catalysed reaction is D-mannose 6-phosphate = D-fructose 6-phosphate. The protein operates within nucleotide-sugar biosynthesis; GDP-alpha-D-mannose biosynthesis; alpha-D-mannose 1-phosphate from D-fructose 6-phosphate: step 1/2. Functionally, involved in the synthesis of the GDP-mannose and dolichol-phosphate-mannose required for a number of critical mannosyl transfer reactions. The protein is Probable mannose-6-phosphate isomerase of Caenorhabditis elegans.